The chain runs to 527 residues: DNA polymerase epsilon subunit 2 (527 aa).

Belongs to the DNA polymerase epsilon subunit B family. As to quaternary structure, component of the DNA polymerase epsilon complex consisting of four subunits: the catalytic subunit POLE and the accessory subunits POLE2, POLE3 and POLE4.

The protein resides in the nucleus. Functionally, accessory component of the DNA polymerase epsilon complex. Participates in DNA repair and in chromosomal DNA replication. In Homo sapiens (Human), this protein is DNA polymerase epsilon subunit 2.